A 198-amino-acid polypeptide reads, in one-letter code: Inosine triphosphate pyrophosphatase (198 aa).

The residue at position 2 (Ala2) is an N-acetylalanine. 14–19 (TGNAKK) contacts ITP. Position 44 (Glu44) interacts with Mg(2+). ITP-binding positions include Lys56, 72-73 (DT), and Lys89. Position 146 is a phosphoserine (Ser146). Residues 149–152 (FGWD), Lys172, and 177–178 (HR) each bind ITP.

It belongs to the HAM1 NTPase family. In terms of assembly, homodimer. It depends on Mg(2+) as a cofactor. Mn(2+) serves as cofactor.

It localises to the cytoplasm. The catalysed reaction is ITP + H2O = IMP + diphosphate + H(+). The enzyme catalyses dITP + H2O = dIMP + diphosphate + H(+). It catalyses the reaction XTP + H2O = XMP + diphosphate + H(+). It carries out the reaction N(6)-hydroxy-dATP + H2O = N(6)-hydroxy-dAMP + diphosphate + H(+). In terms of biological role, pyrophosphatase that hydrolyzes the non-canonical purine nucleotides inosine triphosphate (ITP), deoxyinosine triphosphate (dITP) as well as 2'-deoxy-N-6-hydroxylaminopurine triphosphate (dHAPTP) and xanthosine 5'-triphosphate (XTP) to their respective monophosphate derivatives. The enzyme does not distinguish between the deoxy- and ribose forms. Probably excludes non-canonical purines from RNA and DNA precursor pools, thus preventing their incorporation into RNA and DNA and avoiding chromosomal lesions. In Rattus norvegicus (Rat), this protein is Inosine triphosphate pyrophosphatase (Itpa).